The chain runs to 478 residues: 7-dehydrocholesterol reductase (478 aa).

Positions methionine 1 to glutamate 28 are disordered. Transmembrane regions (helical) follow at residues leucine 43–alanine 63, tryptophan 97–valine 117, tryptophan 180–isoleucine 200, valine 269–tryptophan 289, leucine 309–valine 329, and isoleucine 333–isoleucine 353. Residues lysine 361, arginine 365, methionine 398, tryptophan 403, and asparagine 410 to tyrosine 411 each bind NADP(+). Residues alanine 424 to valine 444 traverse the membrane as a helical segment. NADP(+) contacts are provided by residues aspartate 450, cysteine 454–tyrosine 458, and tyrosine 465.

It belongs to the ERG4/ERG24 family.

It is found in the endoplasmic reticulum membrane. The enzyme catalyses cholesterol + NADP(+) = 7-dehydrocholesterol + NADPH + H(+). It carries out the reaction 7-dehydrodesmosterol + NADPH + H(+) = desmosterol + NADP(+). The protein operates within steroid biosynthesis; cholesterol biosynthesis. Its function is as follows. Catalyzes the last step of the cholesterol synthesis pathway, which transforms cholesta-5,7-dien-3beta-ol (7-dehydrocholesterol,7-DHC) into cholesterol by reducing the C7-C8 double bond of its sterol core. Can also metabolize cholesta-5,7,24-trien-3beta-ol (7-dehydrodemosterol, 7-DHD) to desmosterol, which is then metabolized by the Delta(24)-sterol reductase (DHCR24) to cholesterol. Modulates ferroptosis (a form of regulated cell death driven by iron-dependent lipid peroxidation) through the metabolic breakdown of the anti-ferroptotic metabolites 7-DHC and 7-DHD which, when accumulated, divert the propagation of peroxyl radical-mediated damage from phospholipid components to its sterol core, protecting plasma and mitochondrial membranes from phospholipid autoxidation. The polypeptide is 7-dehydrocholesterol reductase (dhcr7) (Danio rerio (Zebrafish)).